A 412-amino-acid chain; its full sequence is Eukaryotic initiation factor 4A-2 (412 aa).

Ala2 bears the N-acetylalanine mark. Positions 39–67 (ESFDAMGLQENLLRGIYAYGFEKPSAIQQ) match the Q motif motif. The Helicase ATP-binding domain occupies 70 to 240 (IVPFCKGLDV…RKFMSKPVRI (171 aa)). ATP is bound at residue 83–90 (AQSGTGKT). At Thr145 the chain carries Phosphothreonine. The DEAD box signature appears at 188–191 (DEAD). The region spanning 251-412 (GIKQFYVNVE…ELPSNVADLL (162 aa)) is the Helicase C-terminal domain.

It belongs to the DEAD box helicase family. eIF4A subfamily. EIF4F is a multi-subunit complex, the composition of which varies with external and internal environmental conditions. It is composed of at least EIF4A, EIF4E and EIF4G. As to expression, ubiquitous. Preferentially expressed in flowers, young leaves and roots.

It localises to the cytoplasm. It catalyses the reaction ATP + H2O = ADP + phosphate + H(+). In terms of biological role, ATP-dependent RNA helicase which is a subunit of the eIF4F complex involved in cap recognition and is required for mRNA binding to ribosome. In the current model of translation initiation, eIF4A unwinds RNA secondary structures in the 5'-UTR of mRNAs which is necessary to allow efficient binding of the small ribosomal subunit, and subsequent scanning for the initiator codon. This chain is Eukaryotic initiation factor 4A-2 (TIF4A-2), found in Arabidopsis thaliana (Mouse-ear cress).